The primary structure comprises 434 residues: Purple acid phosphatase 22 (434 aa).

The signal sequence occupies residues 1-22; that stretch reads MKLFGLFLSFTLLFLCPFISQA. N116 is a glycosylation site (N-linked (GlcNAc...) asparagine). Residues D148, D175, and Y178 each coordinate Fe cation. D175 provides a ligand contact to Zn(2+). Positions 208 and 292 each coordinate Zn(2+). N208 is a binding site for substrate. H302 functions as the Proton donor in the catalytic mechanism. Residue H329 coordinates Zn(2+). Residue 329–331 participates in substrate binding; the sequence is HVH. Residue H331 participates in Fe cation binding. N-linked (GlcNAc...) asparagine glycosylation is present at N403.

Belongs to the metallophosphoesterase superfamily. Purple acid phosphatase family. Homodimer. Requires Fe cation as cofactor. Zn(2+) serves as cofactor. Expressed in roots, stems, leaves, flowers and siliques.

Its subcellular location is the secreted. The catalysed reaction is a phosphate monoester + H2O = an alcohol + phosphate. The protein is Purple acid phosphatase 22 (PAP22) of Arabidopsis thaliana (Mouse-ear cress).